The following is a 291-amino-acid chain: 4-hydroxy-tetrahydrodipicolinate synthase (291 aa).

Residue threonine 45 participates in pyruvate binding. Tyrosine 133 functions as the Proton donor/acceptor in the catalytic mechanism. Residue lysine 161 is the Schiff-base intermediate with substrate of the active site. Isoleucine 203 provides a ligand contact to pyruvate.

This sequence belongs to the DapA family. Homotetramer; dimer of dimers.

The protein localises to the cytoplasm. It catalyses the reaction L-aspartate 4-semialdehyde + pyruvate = (2S,4S)-4-hydroxy-2,3,4,5-tetrahydrodipicolinate + H2O + H(+). It functions in the pathway amino-acid biosynthesis; L-lysine biosynthesis via DAP pathway; (S)-tetrahydrodipicolinate from L-aspartate: step 3/4. Its function is as follows. Catalyzes the condensation of (S)-aspartate-beta-semialdehyde [(S)-ASA] and pyruvate to 4-hydroxy-tetrahydrodipicolinate (HTPA). This Teredinibacter turnerae (strain ATCC 39867 / T7901) protein is 4-hydroxy-tetrahydrodipicolinate synthase.